The chain runs to 71 residues: ATP synthase subunit c (71 aa).

The next 2 helical transmembrane spans lie at 9 to 29 and 49 to 69; these read MIGY…IFAA and LLGF…AFVI.

This sequence belongs to the ATPase C chain family. In terms of assembly, F-type ATPases have 2 components, F(1) - the catalytic core - and F(0) - the membrane proton channel. F(1) has five subunits: alpha(3), beta(3), gamma(1), delta(1), epsilon(1). F(0) has three main subunits: a(1), b(2) and c(10-14). The alpha and beta chains form an alternating ring which encloses part of the gamma chain. F(1) is attached to F(0) by a central stalk formed by the gamma and epsilon chains, while a peripheral stalk is formed by the delta and b chains.

It is found in the cell membrane. F(1)F(0) ATP synthase produces ATP from ADP in the presence of a proton or sodium gradient. F-type ATPases consist of two structural domains, F(1) containing the extramembraneous catalytic core and F(0) containing the membrane proton channel, linked together by a central stalk and a peripheral stalk. During catalysis, ATP synthesis in the catalytic domain of F(1) is coupled via a rotary mechanism of the central stalk subunits to proton translocation. Its function is as follows. Key component of the F(0) channel; it plays a direct role in translocation across the membrane. A homomeric c-ring of between 10-14 subunits forms the central stalk rotor element with the F(1) delta and epsilon subunits. The protein is ATP synthase subunit c of Micrococcus luteus (strain ATCC 4698 / DSM 20030 / JCM 1464 / CCM 169 / CCUG 5858 / IAM 1056 / NBRC 3333 / NCIMB 9278 / NCTC 2665 / VKM Ac-2230) (Micrococcus lysodeikticus).